The primary structure comprises 166 residues: NAD(P)H-quinone oxidoreductase subunit I, chloroplastic (166 aa).

4Fe-4S ferredoxin-type domains are found at residues Gly-55–Lys-84 and Leu-95–Glu-124. Residues Cys-64, Cys-67, Cys-70, Cys-74, Cys-104, Cys-107, Cys-110, and Cys-114 each coordinate [4Fe-4S] cluster.

It belongs to the complex I 23 kDa subunit family. NDH is composed of at least 16 different subunits, 5 of which are encoded in the nucleus. [4Fe-4S] cluster serves as cofactor.

It localises to the plastid. The protein localises to the chloroplast thylakoid membrane. The enzyme catalyses a plastoquinone + NADH + (n+1) H(+)(in) = a plastoquinol + NAD(+) + n H(+)(out). It carries out the reaction a plastoquinone + NADPH + (n+1) H(+)(in) = a plastoquinol + NADP(+) + n H(+)(out). Functionally, NDH shuttles electrons from NAD(P)H:plastoquinone, via FMN and iron-sulfur (Fe-S) centers, to quinones in the photosynthetic chain and possibly in a chloroplast respiratory chain. The immediate electron acceptor for the enzyme in this species is believed to be plastoquinone. Couples the redox reaction to proton translocation, and thus conserves the redox energy in a proton gradient. In Laphamia lindheimeri (Lindheimer's rockdaisy), this protein is NAD(P)H-quinone oxidoreductase subunit I, chloroplastic.